The sequence spans 157 residues: Protein Smg homolog (157 aa).

This sequence belongs to the Smg family.

In Pseudoalteromonas translucida (strain TAC 125), this protein is Protein Smg homolog.